A 252-amino-acid chain; its full sequence is Membrane protein insertase YidC (252 aa).

A signal peptide spans 1-20 (MRKKFGIIVALIALTTLLSG). A lipid anchor (N-palmitoyl cysteine) is attached at C21. C21 is lipidated: S-diacylglycerol cysteine. The next 5 membrane-spanning stretches (helical) occupy residues 59-79 (YGLAIIIVTLFVRLLLMPLNV), 129-149 (LAGCLPILVQMPIFVAMYHAI), 160-180 (FLWFQLGSPDYILPILTGLFT), 206-226 (IMLYVMPIMIGVMAFFFPAAL), and 228-248 (LYWVTGNIFMVFQTLLINKPM).

Belongs to the OXA1/ALB3/YidC family. Type 2 subfamily.

The protein localises to the cell membrane. Its function is as follows. Required for the insertion and/or proper folding and/or complex formation of integral membrane proteins into the membrane. Involved in integration of membrane proteins that insert both dependently and independently of the Sec translocase complex, as well as at least some lipoproteins. The chain is Membrane protein insertase YidC from Oceanobacillus iheyensis (strain DSM 14371 / CIP 107618 / JCM 11309 / KCTC 3954 / HTE831).